A 91-amino-acid chain; its full sequence is UPF0358 protein SAB0977 (91 aa).

This sequence belongs to the UPF0358 family.

This is UPF0358 protein SAB0977 from Staphylococcus aureus (strain bovine RF122 / ET3-1).